The following is a 643-amino-acid chain: Fructose-1,6-bisphosphatase class 3 (643 aa).

The protein belongs to the FBPase class 3 family. Mn(2+) is required as a cofactor.

The enzyme catalyses beta-D-fructose 1,6-bisphosphate + H2O = beta-D-fructose 6-phosphate + phosphate. Its pathway is carbohydrate biosynthesis; gluconeogenesis. This Streptococcus agalactiae serotype Ia (strain ATCC 27591 / A909 / CDC SS700) protein is Fructose-1,6-bisphosphatase class 3.